The sequence spans 315 residues: Ester hydrolase C11orf54 homolog (315 aa).

Residues His266, His268, and His278 each contribute to the Zn(2+) site.

As to quaternary structure, monomer. Requires Zn(2+) as cofactor.

It localises to the nucleus. Its subcellular location is the cytoplasm. Its function is as follows. Exhibits ester hydrolase activity on the substrate p-nitrophenyl acetate, in vitro. Regulates DNA damage and repair by regulating HIF1A degradation via chaperone-mediated autophagy (CMA). The protein is Ester hydrolase C11orf54 homolog of Mus musculus (Mouse).